A 113-amino-acid chain; its full sequence is Large ribosomal subunit protein uL22 (113 aa).

The protein belongs to the universal ribosomal protein uL22 family. As to quaternary structure, part of the 50S ribosomal subunit.

Functionally, this protein binds specifically to 23S rRNA; its binding is stimulated by other ribosomal proteins, e.g. L4, L17, and L20. It is important during the early stages of 50S assembly. It makes multiple contacts with different domains of the 23S rRNA in the assembled 50S subunit and ribosome. Its function is as follows. The globular domain of the protein is located near the polypeptide exit tunnel on the outside of the subunit, while an extended beta-hairpin is found that lines the wall of the exit tunnel in the center of the 70S ribosome. This is Large ribosomal subunit protein uL22 from Geobacillus sp. (strain WCH70).